A 380-amino-acid polypeptide reads, in one-letter code: Crotonobetainyl-CoA reductase (380 aa).

This sequence belongs to the acyl-CoA dehydrogenase family. As to quaternary structure, homotetramer. FAD serves as cofactor.

It is found in the cytoplasm. The enzyme catalyses 4-(trimethylamino)butanoyl-CoA + oxidized [electron-transfer flavoprotein] + H(+) = crotonobetainyl-CoA + reduced [electron-transfer flavoprotein]. The protein operates within amine and polyamine metabolism; carnitine metabolism. Its function is as follows. Catalyzes the reduction of crotonobetainyl-CoA to gamma-butyrobetainyl-CoA. The protein is Crotonobetainyl-CoA reductase of Salmonella agona (strain SL483).